Consider the following 307-residue polypeptide: Transmembrane and coiled-coil domain-containing protein 5B (307 aa).

The stretch at 20–212 forms a coiled coil; that stretch reads TLEAIKQNLK…SKAQNDSSQV (193 aa). The helical transmembrane segment at 246 to 268 threads the bilayer; that stretch reads YLFFMVMIVIRLLGYVFFHLQYV.

This sequence belongs to the TMCO5 family.

Its subcellular location is the membrane. This is Transmembrane and coiled-coil domain-containing protein 5B (Tmco5b) from Mus musculus (Mouse).